The sequence spans 2237 residues: MSEELARSKQYGYKENSNLVFYSERNRSELKEPKGEPETLWGRLRGEMGDRVNYSKPLELLEKMQNLKRKTIEKEGGDVNSSNDTYSTTKKVKNQNPLEKKSTNRKSNGNNNNEKPIDILSATESFQGLYKPKTKETRITYETLLTFIQRYVGDQPTEVVKGALDEILSILKDDTIRAPEKKIEISKLLKGLNDVSFAELTQLGKQITDFKDSELAKQQQQQQQQQSMDSLDDEQGVAVIIDEEEEEENLSDFEIRDDDDDDDDVDNNEVDDNNNNDSEAQDSEIQTKDENNNDDDENQKIKENNNNNNKSQKPDTKNTKDDKNNNSKLISPNEIDSFWIQRKISEFERDHDLSKQLAEKTLNILRQPNVRRCEQQLVDLFTIDKLDFLKLIINNKQTILYCTLLAKAENDQERKKIEDEMSSNPVTLSILNRLKGNEVTAATTEKTIEKTESNKKDVEMKQQQQQQQDEIKKPKKLLNLEELSFQQGSHLMTNKEFKFPKGSKREQYKGFEEIHVPARANPPFNPNERLISIEELPEWSRLPFEESGVKSLNRVQSKLFDCAFKTDNNLLLSAPTSSGKTNVAMLTILHEIGKNRDRDSGKIRLDAFKIVYIAPMKSLVQEMVGNFSKRLKSYGIVVNELTGDQSLTNKQISETQIIVTTPEKWDIITRKSGDRAYTQLVKLIIIDEIHLLHDERGPVLECIVARTLRMIESTQQMVRLVGLSATLPNYEDVATFLRVEPDGVFYFDSSYRPIPLEQQYIGISDRGIKQLQRCNDITFTKVSERVGDHQILIFVHSRRETAKTGKDLRDRAVEDQSIDRYIRDPASREILRATASKQIQNAELKDLLPYGIGIHHAGLSRSDRSLVEDLFGDNRIQVLISTATLAWGVNLPAHTVIIKGTQIYNPEKGWCELSPLDVTQMLGRAGRPPFDKEGEGIIITSQHELQFYLSLLNTQLSIESQFISRIADNLNAEIVLGSIQTVRDAVNWLGYTYLYICMIRNPPLYEISYDDFEKDPLLEQRRLDLVHSAATILEKNSLIKYDRKSGKLQSTELGKVASHYYITNSSMSIYQEHLKPSMSDIELLRVFSLSSEFKNVVVREGEKFELEKLLERVPIPIKENIEEPSSKINVLLQTYISNLKLDGFALVVDMFYIAQSASRITRALFEIVLKKGWAQLAKKILNLAKMIDSKMWSSQSPLRQFHKISPKVLNQLERRGIPIEDLYEYNSQQLGNAIQNPSEGKQLFDLIHNFPKLDLTAHVQPILHGLLRVELSITPDFQYDERYHNNSIGWWIIVEDVDGERILYFEYFSLKKKMVNGEDQLVSFTVPLSQPLPPQYYVRVISDHWIGAEYSLPISFQHLILPEKYPPCRPLLDLQPLPIQVLKDPKAESIFKPTFSIFNAIQTQVFNCMYQSNDNAFISAPTNSGKTVCAEIALIRCFKQNPKAKVVYLAPMQDLASVRLKDWSNKFGVKSPFGLVVSDLTGDAVTDNKILDRSNIIVTNCEKWDILSRKWKQRKALQSINLLIVDELHLIGGEYGPTMEIVVSRMRYISTQTGNALRVIALSSSIANARDLVLWIGATPQTCYNFHPNVRPIPVEYQIQGFEFPHFNARMLAMTKPTVYEVAKNKNQQSIVFVPTRKLSRSLAADIIANVSSFEDTLTKPYLVCEEHVLTPYLEDVDSFALKQSLQMGVAFYHDGLTERERRVVEILFRSGSIRVLIATHSVAWLLDNVFAQLVVIMGTQLYQGKDIRYIDYPINDILQMIGRAGKQEGGGVISNKVAKVLLLCHAPKKEYYKMFLNEPLPVESHLDHCLHDQFNSEIVTKTITKKQDALDYLTWTFLYRRLNQNPNYYNLSGVSHLHLSEHLSELVENTLVELEQSNCITIQDDQDKVSPLNLGIIASYYYLKYQTIELFGSSLKSTTRRRGIMDIISNAPEFNSLPIRHREDQILMKLASHLPQKIDKPNYQEISTKVNVLLQCHFSRESISADLYQDQKFILENATRLLQAIVDVISSNSWLQPAIAAMELSQMITQAMWDSDSVFKQLPHMNKRRIDAITSQGIESVFDLMSLDDNSRIQLLDLSQQESNDLVQSFMKYPDIDISYQVQDEDDLHADSIMTVEMVIERDLGDDEENPIEINDSINVVSAPYYPKEKICGWWALIGDSKNNHLLAIKRITFLKKTKVKFEFPTPAVGKHQLSLYLFSDSYNGCDQEHELNINILPAEIEDEDEDEEEDNEMDE.

Disordered stretches follow at residues 1 to 48 (MSEE…RGEM), 71 to 118 (TIEK…KPID), 242 to 330 (DEEE…SKLI), and 445 to 472 (EKTI…DEIK). Residues 24–37 (ERNRSELKEPKGEP) show a composition bias toward basic and acidic residues. Over residues 79–97 (VNSSNDTYSTTKKVKNQNP) the composition is skewed to polar residues. Over residues 105-114 (RKSNGNNNNE) the composition is skewed to low complexity. Residues 242–282 (DEEEEEENLSDFEIRDDDDDDDDVDNNEVDDNNNNDSEAQD) show a composition bias toward acidic residues. Basic and acidic residues-rich tracts occupy residues 312-325 (QKPD…DKNN) and 446-460 (KTIE…DVEM). The stretch at 440–468 (TAATTEKTIEKTESNKKDVEMKQQQQQQQ) forms a coiled coil. The Helicase ATP-binding 1 domain maps to 561-745 (DCAFKTDNNL…FLRVEPDGVF (185 aa)). 574-581 (APTSSGKT) is an ATP binding site. The DEAH box motif lies at 687–690 (DEIH). A Helicase C-terminal 1 domain is found at 755–990 (PLEQQYIGIS…TVRDAVNWLG (236 aa)). The region spanning 1050–1356 (STELGKVASH…GAEYSLPISF (307 aa)) is the SEC63 1 domain. The Helicase ATP-binding 2 domain occupies 1407–1584 (NCMYQSNDNA…WIGATPQTCY (178 aa)). 1420–1427 (APTNSGKT) lines the ATP pocket. The DEAH box motif lies at 1526–1529 (DELH). The 176-residue stretch at 1657–1832 (TLTKPYLVCE…TITKKQDALD (176 aa)) folds into the Helicase C-terminal 2 domain. The SEC63 2 domain occupies 1892-2215 (PLNLGIIASY…GCDQEHELNI (324 aa)).

It belongs to the helicase family.

This Dictyostelium discoideum (Social amoeba) protein is Activating signal cointegrator 1 complex subunit 3-like (ascc3l).